A 163-amino-acid chain; its full sequence is uncharacterized protein (163 aa).

A run of 2 helical transmembrane segments spans residues 7 to 27 (YLNEIWLIIGIICILVECYIV) and 51 to 71 (LVIFTLTNQITFFGLFSLVWF).

The protein resides in the cell membrane. This is an uncharacterized protein from Rickettsia prowazekii (strain Madrid E).